Here is a 102-residue protein sequence, read N- to C-terminus: Circadian clock oscillator protein KaiB (102 aa).

Belongs to the KaiB family. As to quaternary structure, undergoes a major conformational rearrangment; in the free state forms homotetramers with 2 dimers. When bound to the CI domain of KaiC switches to a monomeric thioredoxin-fold (KaiB(fs)). Monomers, homodimers and homotetramers are detected in solution; at low concentrations only monomers are seen. In vitro forms KaiC(6):KaiB(1) and KaiC(6):KaiB(6) complexes. Only associates with 'Ser-431'-phosphorylated KaiC (and not with doubly phosphorylated KaiC). Complex formation between KaiB and KaiC is regulated by the phosphorylation state of KaiC and by an ATP hydrolysis-driven conformation change in the CI ring of KaiC; complex formation is slow. Slow complex formation is crucial for the timing of the circadian period. In low resolution cryo-EM forms a KaiC(6):KaiB(6) complex. The KaiABC complex composition changes during the circadian cycle to control KaiC phosphorylation. Complexes KaiC(6), KaiA(2-4):KaiC(6), KaiB(6):KaiC(6) and KaiC(6):KaiB(6):KaiA(12) are among the most important forms, many form cooperatively. The KaiB:KaiC complex is more prevalent at 16 hours (in the dark) than at 4 hours (in the light) in the circadian cycle. The KaiA:KaiB complex is only found at 20-24 hours in the circadian cycle (subjective night). Binds to the CI domain of KaiC; SasA and KaiB compete to bind to the CI domain.

It is found in the cytoplasm. Its subcellular location is the cell membrane. Its function is as follows. Key component of the KaiABC oscillator complex, which constitutes the main circadian regulator in cyanobacteria. Complex composition changes during the circadian cycle to control KaiC phosphorylation. KaiA stimulates KaiC autophosphorylation, while KaiB sequesters KaiA, leading to KaiC autodephosphorylation. KaiA binding to the KaiC CII domain yields KaiA(2-4):KaiC(6) complexes which stimulate KaiC autophosphorylation. Phospho-Ser-431 KaiC accumulation triggers binding of KaiB to form the KaiB(6):KaiC(6) complex, leading to changes in the output regulators CikA and SasA. KaiB switches to a thioredoxin-like fold (KaiB(fs)) in complex with KaiC. KaiB(6):KaiC(6) formation exposes a site for KaiA binding that sequesters KaiA from the CII domain, making the KaiC(6):KaiB(6):KaiA(12) complex that results in KaiC autodephosphorylation. Complete dephosphorylation of KaiC leads to dissociation of KaiA(2):KaiB(1), completing 1 cycle of the Kai oscillator. Functionally, circadian oscillations can be generated in vitro by incubating KaiA, KaiB and KaiC with 1 mM ATP. The cycle is self-sustainable for at least 3 cycles and resistant to temperature changes. A very robust clock is reconstituted with KaiA, KaiB, KaiC, SasA, CikA and RpaA; output is measured by transcription from an appropriate reporter. In terms of biological role, a metamorphic protein which reversibly switches between an inactive tetrameric fold and a rare, thioredoxin-like monomeric fold (KaiB(fs)). KaiB(fs) binds phospho-KaiC, KaiA and CikA. KaiA and CikA compete for binding to KaiB(fs), and KaiB(fs) and SasA compete for binding to KaiC, thus the clock oscillator and output signal pathway are tightly coupled. The polypeptide is Circadian clock oscillator protein KaiB (Synechococcus elongatus (strain ATCC 33912 / PCC 7942 / FACHB-805) (Anacystis nidulans R2)).